Reading from the N-terminus, the 222-residue chain is 2-hydroxy-3-keto-5-methylthiopentenyl-1-phosphate phosphatase (222 aa).

It belongs to the HAD-like hydrolase superfamily. MtnX family.

The catalysed reaction is 2-hydroxy-5-methylsulfanyl-3-oxopent-1-enyl phosphate + H2O = 1,2-dihydroxy-5-(methylsulfanyl)pent-1-en-3-one + phosphate. It functions in the pathway amino-acid biosynthesis; L-methionine biosynthesis via salvage pathway; L-methionine from S-methyl-5-thio-alpha-D-ribose 1-phosphate: step 4/6. Functionally, dephosphorylates 2-hydroxy-3-keto-5-methylthiopentenyl-1-phosphate (HK-MTPenyl-1-P) yielding 1,2-dihydroxy-3-keto-5-methylthiopentene (DHK-MTPene). The sequence is that of 2-hydroxy-3-keto-5-methylthiopentenyl-1-phosphate phosphatase from Brevibacillus brevis (strain 47 / JCM 6285 / NBRC 100599).